Here is a 283-residue protein sequence, read N- to C-terminus: Elongation factor Ts (283 aa).

The tract at residues 79–82 (TDFV) is involved in Mg(2+) ion dislocation from EF-Tu.

This sequence belongs to the EF-Ts family.

It is found in the cytoplasm. Functionally, associates with the EF-Tu.GDP complex and induces the exchange of GDP to GTP. It remains bound to the aminoacyl-tRNA.EF-Tu.GTP complex up to the GTP hydrolysis stage on the ribosome. In Shewanella baltica (strain OS155 / ATCC BAA-1091), this protein is Elongation factor Ts.